We begin with the raw amino-acid sequence, 292 residues long: 1D-myo-inositol 2-acetamido-2-deoxy-alpha-D-glucopyranoside deacetylase (292 aa).

Positions 11, 14, and 146 each coordinate Zn(2+).

Belongs to the MshB deacetylase family. Zn(2+) is required as a cofactor.

The enzyme catalyses 1D-myo-inositol 2-acetamido-2-deoxy-alpha-D-glucopyranoside + H2O = 1D-myo-inositol 2-amino-2-deoxy-alpha-D-glucopyranoside + acetate. Functionally, catalyzes the deacetylation of 1D-myo-inositol 2-acetamido-2-deoxy-alpha-D-glucopyranoside (GlcNAc-Ins) in the mycothiol biosynthesis pathway. This Acidothermus cellulolyticus (strain ATCC 43068 / DSM 8971 / 11B) protein is 1D-myo-inositol 2-acetamido-2-deoxy-alpha-D-glucopyranoside deacetylase.